Here is a 277-residue protein sequence, read N- to C-terminus: MDSAVDRHVFYISDGTAITAEVLGHAVMSQFPVTISSITLPFVENESRARAVKDQIDAIYHQTGVRPLVFYSIVLPEIRAIILQSEGFCQDIVQALVAPLQQEMKLDPTPIAHRTHGLTPGNLNKYDARIAAIDYTLAHDDGISLRNLDQAQVILLGVSRCGKTPTSLYLAMQFGIRAANYPFIADDMDNLVLPASLKPLQHKLFGLTINPERLAAIREERRENSRYASLRQCRMEVAEVEALYRKNQIPWINSTNYSVEEIATKILDIMGLNRRMY.

G157–T164 contacts ADP.

The protein belongs to the pyruvate, phosphate/water dikinase regulatory protein family. PSRP subfamily.

It catalyses the reaction [pyruvate, water dikinase] + ADP = [pyruvate, water dikinase]-phosphate + AMP + H(+). The catalysed reaction is [pyruvate, water dikinase]-phosphate + phosphate + H(+) = [pyruvate, water dikinase] + diphosphate. Bifunctional serine/threonine kinase and phosphorylase involved in the regulation of the phosphoenolpyruvate synthase (PEPS) by catalyzing its phosphorylation/dephosphorylation. In Escherichia fergusonii (strain ATCC 35469 / DSM 13698 / CCUG 18766 / IAM 14443 / JCM 21226 / LMG 7866 / NBRC 102419 / NCTC 12128 / CDC 0568-73), this protein is Phosphoenolpyruvate synthase regulatory protein.